The following is a 233-amino-acid chain: Choline-phosphate cytidylyltransferase (233 aa).

Residues Leu-6, Ala-8, Gly-9, Tyr-80, Ser-85, and Ala-101 each contribute to the CDP-choline site. Position 102 (Asp-102) interacts with Mg(2+). CDP-choline is bound at residue Tyr-187. The Mg(2+) site is built by Glu-213 and Asp-215.

The protein belongs to the LicC/PntC cytidylyltransferase family. Requires Mg(2+) as cofactor.

The catalysed reaction is phosphocholine + CTP + H(+) = CDP-choline + diphosphate. Its pathway is lipopolysaccharide biosynthesis. Functionally, cytidylyltransferase involved in the biosynthesis of lipopolysaccharides (LPS), a necessary component and antigenic determinant of the outer membrane that has been shown to be an important factor in the host-parasite interaction in a number of Gram-negative species. Catalyzes the activation of phosphocholine (P-Cho) to CDP-choline (CDP-Cho). LicC is critical for the expression of the 6A2-specific epitope. This Haemophilus influenzae (strain ATCC 51907 / DSM 11121 / KW20 / Rd) protein is Choline-phosphate cytidylyltransferase.